A 256-amino-acid polypeptide reads, in one-letter code: Thiazole synthase (256 aa).

Residue K96 is the Schiff-base intermediate with DXP of the active site. 1-deoxy-D-xylulose 5-phosphate is bound by residues G157, 183–184 (AG), and 205–206 (NT).

The protein belongs to the ThiG family. In terms of assembly, homotetramer. Forms heterodimers with either ThiH or ThiS.

It is found in the cytoplasm. The catalysed reaction is [ThiS sulfur-carrier protein]-C-terminal-Gly-aminoethanethioate + 2-iminoacetate + 1-deoxy-D-xylulose 5-phosphate = [ThiS sulfur-carrier protein]-C-terminal Gly-Gly + 2-[(2R,5Z)-2-carboxy-4-methylthiazol-5(2H)-ylidene]ethyl phosphate + 2 H2O + H(+). The protein operates within cofactor biosynthesis; thiamine diphosphate biosynthesis. Catalyzes the rearrangement of 1-deoxy-D-xylulose 5-phosphate (DXP) to produce the thiazole phosphate moiety of thiamine. Sulfur is provided by the thiocarboxylate moiety of the carrier protein ThiS. In vitro, sulfur can be provided by H(2)S. The sequence is that of Thiazole synthase from Clostridioides difficile (strain 630) (Peptoclostridium difficile).